The chain runs to 321 residues: NADPH-dependent codeinone reductase 1-3 (321 aa).

NADPH-binding residues include Thr-27 and Asp-51. Active-site proton donor residues include Tyr-56 and His-119. Residue His-119 participates in substrate binding. NADPH is bound by residues Gln-187, Ser-214, Leu-216, Ser-264, and Arg-269. Residues 300–321 (ADFLLSPTGPFKTEEEFWDEKD) form a disordered region.

It belongs to the aldo/keto reductase family. In terms of tissue distribution, latex secreting cells (laticifer cells). Expressed constitutively in all organs with highest levels in capsules. Restricted to the parietal region of sieve elements adjacent or proximal to laticifers in roots, stems, leaves and carpels.

It is found in the cytoplasm. The protein resides in the cytosol. The catalysed reaction is codeine + NADP(+) = codeinone + NADPH + H(+). It catalyses the reaction neopine + NADP(+) = neopinone + NADPH + H(+). It carries out the reaction morphine + NADP(+) = morphinone + NADPH + H(+). The enzyme catalyses neomorphine + NADP(+) = neomorphinone + NADPH + H(+). It functions in the pathway alkaloid biosynthesis; morphine biosynthesis. Functionally, NADPH-dependent codeinone reductase involved in biosynthesis of morphinan-type benzylisoquinoline and opiate alkaloids natural products. Reduces codeinone to codeine in the penultimate step in morphine biosynthesis. Can use morphinone, hydrocodone and hydromorphone as substrate during reductive reaction with NADPH as cofactor, and morphine and dihydrocodeine as substrate during oxidative reaction with NADP as cofactor. Converts morphinone to morphine, and neomorphinone to neomorphine. Reduces irreversibly neopinone, a spontaneous isomer of codeinone, to neopine; in planta, neopine levels are limited to low levels. The polypeptide is NADPH-dependent codeinone reductase 1-3 (Papaver somniferum (Opium poppy)).